A 1058-amino-acid polypeptide reads, in one-letter code: Carbamoyl phosphate synthase large chain (1058 aa).

The carboxyphosphate synthetic domain stretch occupies residues M1–E401. Positions 129, 169, 175, 176, 208, 210, 215, 241, 242, 243, 284, and 298 each coordinate ATP. The ATP-grasp 1 domain occupies K133–V327. Residues Q284, E298, and N300 each contribute to the Mg(2+) site. Mn(2+) contacts are provided by Q284, E298, and N300. The interval I402 to S546 is oligomerization domain. The segment at I547–Y929 is carbamoyl phosphate synthetic domain. One can recognise an ATP-grasp 2 domain in the interval E671–L861. ATP is bound by residues R707, S746, I748, E752, G777, V778, H779, S780, Q820, and E832. The Mg(2+) site is built by Q820, E832, and N834. Mn(2+) contacts are provided by Q820, E832, and N834. Residues L930–I1058 form the MGS-like domain. Residues L930–I1058 form an allosteric domain region.

Belongs to the CarB family. In terms of assembly, composed of two chains; the small (or glutamine) chain promotes the hydrolysis of glutamine to ammonia, which is used by the large (or ammonia) chain to synthesize carbamoyl phosphate. Tetramer of heterodimers (alpha,beta)4. The cofactor is Mg(2+). Mn(2+) serves as cofactor.

It catalyses the reaction hydrogencarbonate + L-glutamine + 2 ATP + H2O = carbamoyl phosphate + L-glutamate + 2 ADP + phosphate + 2 H(+). The catalysed reaction is hydrogencarbonate + NH4(+) + 2 ATP = carbamoyl phosphate + 2 ADP + phosphate + 2 H(+). It functions in the pathway amino-acid biosynthesis; L-arginine biosynthesis; carbamoyl phosphate from bicarbonate: step 1/1. Its pathway is pyrimidine metabolism; UMP biosynthesis via de novo pathway; (S)-dihydroorotate from bicarbonate: step 1/3. Large subunit of the glutamine-dependent carbamoyl phosphate synthetase (CPSase). CPSase catalyzes the formation of carbamoyl phosphate from the ammonia moiety of glutamine, carbonate, and phosphate donated by ATP, constituting the first step of 2 biosynthetic pathways, one leading to arginine and/or urea and the other to pyrimidine nucleotides. The large subunit (synthetase) binds the substrates ammonia (free or transferred from glutamine from the small subunit), hydrogencarbonate and ATP and carries out an ATP-coupled ligase reaction, activating hydrogencarbonate by forming carboxy phosphate which reacts with ammonia to form carbamoyl phosphate. This Streptococcus pneumoniae serotype 2 (strain D39 / NCTC 7466) protein is Carbamoyl phosphate synthase large chain.